Reading from the N-terminus, the 549-residue chain is Eukaryotic translation initiation factor 3 subunit D (549 aa).

Residues 101 to 130 (QSYQRGRARGQRGRGARGARTPGGMTTLNK) are disordered. Over residues 106–117 (GRARGQRGRGAR) the composition is skewed to basic residues. The tract at residues 277 to 291 (EFDLLTVNETSVEPP) is RNA gate. The disordered stretch occupies residues 521 to 549 (ESDASEESGDEQADTPFAPLYSYGNSKRV). A compositionally biased stretch (acidic residues) spans 523 to 533 (DASEESGDEQA).

Belongs to the eIF-3 subunit D family. In terms of assembly, component of the eukaryotic translation initiation factor 3 (eIF-3) complex.

It localises to the cytoplasm. Its function is as follows. mRNA cap-binding component of the eukaryotic translation initiation factor 3 (eIF-3) complex, which is involved in protein synthesis of a specialized repertoire of mRNAs and, together with other initiation factors, stimulates binding of mRNA and methionyl-tRNAi to the 40S ribosome. The eIF-3 complex specifically targets and initiates translation of a subset of mRNAs involved in cell proliferation. In the eIF-3 complex, eif3d specifically recognizes and binds the 7-methylguanosine cap of a subset of mRNAs. The sequence is that of Eukaryotic translation initiation factor 3 subunit D from Bombyx mori (Silk moth).